A 368-amino-acid chain; its full sequence is CST complex subunit STN1 (368 aa).

Residues 1-185 (MQPGSSRCEE…KVYDQPFHSS (185 aa)) form an interaction with CTC1 region. A DNA-binding region (OB) is located at residues 57-155 (VDVLGTVIGV…EIHATTYYKV (99 aa)). Winged helix-turn-helix (wHTH) regions lie at residues 191 to 295 (EALS…YVTR) and 296 to 368 (EDKD…YTAF).

It belongs to the STN1 family. As to quaternary structure, component of the CST complex, composed of TEN1/C17orf106, CTC1/C17orf68 and STN1; in the complex interacts directly with TEN1 and CTC1. Interacts with ACD/TPP1, POT1 and POLA1.

The protein localises to the nucleus. The protein resides in the chromosome. Its subcellular location is the telomere. Its function is as follows. Component of the CST complex proposed to act as a specialized replication factor promoting DNA replication under conditions of replication stress or natural replication barriers such as the telomere duplex. The CST complex binds single-stranded DNA with high affinity in a sequence-independent manner, while isolated subunits bind DNA with low affinity by themselves. Initially the CST complex has been proposed to protect telomeres from DNA degradation. However, the CST complex has been shown to be involved in several aspects of telomere replication. The CST complex inhibits telomerase and is involved in telomere length homeostasis; it is proposed to bind to newly telomerase-synthesized 3' overhangs and to terminate telomerase action implicating the association with the ACD:POT1 complex thus interfering with its telomerase stimulation activity. The CST complex is also proposed to be involved in fill-in synthesis of the telomeric C-strand probably implicating recruitment and activation of DNA polymerase alpha. The CST complex facilitates recovery from many forms of exogenous DNA damage; seems to be involved in the re-initiation of DNA replication at repaired forks and/or dormant origins. Required for efficicient replication of the duplex region of the telomere. Promotes efficient replication of lagging-strand telomeres. Promotes general replication start following replication-fork stalling implicating new origin firing. May be in involved in C-strand fill-in during late S/G2 phase independent of its role in telomere duplex replication. In terms of biological role, component of the CST complex, a complex that binds to single-stranded DNA and is required to protect telomeres from DNA degradation. The CST complex binds single-stranded DNA with high affinity in a sequence-independent manner, while isolated subunits bind DNA with low affinity by themselves. In addition to telomere protection, the CST complex has probably a more general role in DNA metabolism at non-telomeric sites. This chain is CST complex subunit STN1, found in Homo sapiens (Human).